A 298-amino-acid chain; its full sequence is Acetyl-coenzyme A carboxylase carboxyl transferase subunit beta (298 aa).

The tract at residues 1–21 is disordered; it reads MNQEVKSGKVLSPSTPWTQRP. A CoA carboxyltransferase N-terminal domain is found at 41–298; that stretch reads PTIECPECHA…RLVSKLMNLP (258 aa). The Zn(2+) site is built by cysteine 45, cysteine 48, cysteine 64, and cysteine 67. The C4-type zinc finger occupies 45–67; it reads CPECHALVTRTAISFNAYVCPQC.

It belongs to the AccD/PCCB family. Acetyl-CoA carboxylase is a heterohexamer composed of biotin carboxyl carrier protein (AccB), biotin carboxylase (AccC) and two subunits each of ACCase subunit alpha (AccA) and ACCase subunit beta (AccD). Zn(2+) serves as cofactor.

The protein localises to the cytoplasm. The catalysed reaction is N(6)-carboxybiotinyl-L-lysyl-[protein] + acetyl-CoA = N(6)-biotinyl-L-lysyl-[protein] + malonyl-CoA. The protein operates within lipid metabolism; malonyl-CoA biosynthesis; malonyl-CoA from acetyl-CoA: step 1/1. In terms of biological role, component of the acetyl coenzyme A carboxylase (ACC) complex. Biotin carboxylase (BC) catalyzes the carboxylation of biotin on its carrier protein (BCCP) and then the CO(2) group is transferred by the transcarboxylase to acetyl-CoA to form malonyl-CoA. In Acinetobacter baumannii (strain AYE), this protein is Acetyl-coenzyme A carboxylase carboxyl transferase subunit beta.